The sequence spans 530 residues: Na(+)/H(+) antiporter NhaB (530 aa).

The next 11 helical transmembrane spans lie at 23–43 (VAII…NPFL), 45–65 (GWLL…CYPL), 90–110 (LVAN…IYFM), 113–133 (LLLF…LLSI), 140–160 (AFLS…SVAV), 205–225 (LLMH…VGEP), 238–258 (FGEF…AGML), 308–328 (IAVW…LIGL), 351–371 (EEAL…AVII), 451–471 (ATPN…APLI), and 479–499 (VIMA…GIMF).

It belongs to the NhaB Na(+)/H(+) (TC 2.A.34) antiporter family.

It localises to the cell inner membrane. The catalysed reaction is 2 Na(+)(in) + 3 H(+)(out) = 2 Na(+)(out) + 3 H(+)(in). Na(+)/H(+) antiporter that extrudes sodium in exchange for external protons. In Vibrio cholerae serotype O1 (strain ATCC 39541 / Classical Ogawa 395 / O395), this protein is Na(+)/H(+) antiporter NhaB.